The sequence spans 389 residues: Cytochrome b (389 aa).

Helical transmembrane passes span 36–56 (MGSLLGLCLVIQICTGIFLAM), 80–102 (WLIRYMHANGASFFFMCMYTHIA), 117–137 (VWTVGVIIFVLTMAAAFLGYC), and 183–203 (FFAFHYLVPFIIAAVVIMHMM). H86 and H100 together coordinate heme b. H187 and H201 together coordinate heme b. H206 is an a ubiquinone binding site. The next 4 membrane-spanning stretches (helical) occupy residues 229 to 249 (FVFKDLITVFVFMILFSLFVF), 293 to 313 (LLGVITMFAAILVLLVLPITD), 325 to 345 (LSKFFFFIFVFNFVLLGIIGM), and 352 to 372 (FVLIGQISTGIYFAYFIIIVP).

This sequence belongs to the cytochrome b family. In terms of assembly, fungal cytochrome b-c1 complex contains 10 subunits; 3 respiratory subunits, 2 core proteins and 5 low-molecular weight proteins. Cytochrome b-c1 complex is a homodimer. Requires heme b as cofactor.

The protein resides in the mitochondrion inner membrane. Component of the ubiquinol-cytochrome c reductase complex (complex III or cytochrome b-c1 complex) that is part of the mitochondrial respiratory chain. The b-c1 complex mediates electron transfer from ubiquinol to cytochrome c. Contributes to the generation of a proton gradient across the mitochondrial membrane that is then used for ATP synthesis. In Vanderwaltozyma polyspora (strain ATCC 22028 / DSM 70294 / BCRC 21397 / CBS 2163 / NBRC 10782 / NRRL Y-8283 / UCD 57-17) (Kluyveromyces polysporus), this protein is Cytochrome b (COB).